Here is a 188-residue protein sequence, read N- to C-terminus: Elongation factor P (188 aa).

The protein belongs to the elongation factor P family.

Its subcellular location is the cytoplasm. It participates in protein biosynthesis; polypeptide chain elongation. In terms of biological role, involved in peptide bond synthesis. Stimulates efficient translation and peptide-bond synthesis on native or reconstituted 70S ribosomes in vitro. Probably functions indirectly by altering the affinity of the ribosome for aminoacyl-tRNA, thus increasing their reactivity as acceptors for peptidyl transferase. The chain is Elongation factor P from Sulfurimonas denitrificans (strain ATCC 33889 / DSM 1251) (Thiomicrospira denitrificans (strain ATCC 33889 / DSM 1251)).